Here is a 373-residue protein sequence, read N- to C-terminus: Ca(2+)/H(+) antiporter (373 aa).

The next 11 membrane-spanning stretches (helical) occupy residues 6-26 (TIFFGLLLFIPISLLGHWLHW), 29-49 (VSIFLTASLAIIPLAAFMGEA), 61-81 (LGGLLNATFGNATELILAFIA), 94-114 (ITGSIISNLLLVMGFAMLLGG), 134-154 (MNLAVIAILLPTAVEHTSNGI), 162-182 (LSVAVAIVLIIVYGLTLLFSM), 220-240 (FWLGILLVVTITVAIESELLV), 249-269 (SLGLTALFTGVILLPVIGNAA), 291-311 (VGSTLQIALFVAPVLVIAGWI), 318-338 (LDFNPFELVAVAVSVLIANSI), and 349-369 (GSLLLATYIVIGLAFFFHPVV).

Belongs to the Ca(2+):cation antiporter (CaCA) (TC 2.A.19) family. Cation/proton exchanger (CAX) subfamily.

The protein localises to the cell inner membrane. Functionally, ca(+)/H(+) antiporter that extrudes calcium in exchange for external protons. Plays an important role in salt tolerance. Does not transport sodium or lithium. The chain is Ca(2+)/H(+) antiporter from Aphanothece halophytica.